Consider the following 291-residue polypeptide: Methylsterol monooxygenase 1-3 (291 aa).

3 helical membrane-spanning segments follow: residues 41–61 (TILVLFLVFSLAPFPLVIVEW), 92–112 (FLLVVGTLQIVSYPSIQMVGI), and 114–134 (SGLPLPSLMEIVAQLVVYFLI). A Fatty acid hydroxylase domain is found at 128–263 (LVVYFLIEDY…FTYCDYIYGT (136 aa)). A Histidine box-1 motif is present at residues 143-147 (HRWMH). Residues 156–160 (HRIHH) carry the Histidine box-2 motif. A helical membrane pass occupies residues 178-198 (ILILGIPTFLGPAIAPGHIMT). Positions 235–241 (YHDYHHY) match the Histidine box-3 motif.

Belongs to the sterol desaturase family. In terms of assembly, interacts with ACBP1. The cofactor is Fe cation. In terms of tissue distribution, expressed at low levels in leaves, roots, siliques and flowers.

It localises to the endoplasmic reticulum membrane. The enzyme catalyses 4,4-dimethyl-5alpha-cholest-7-en-3beta-ol + 6 Fe(II)-[cytochrome b5] + 3 O2 + 5 H(+) = 4alpha-carboxy-4beta-methyl-5alpha-cholest-7-ene-3beta-ol + 6 Fe(III)-[cytochrome b5] + 4 H2O. The catalysed reaction is 24-methylidenelophenol + 6 Fe(II)-[cytochrome b5] + 3 O2 + 5 H(+) = 4alpha-carboxy-ergosta-7,24(24(1))-dien-3beta-ol + 6 Fe(III)-[cytochrome b5] + 4 H2O. Its function is as follows. Non-heme iron oxygenase involved in sterols biosynthesis by catalyzing the removal of the first methyl group at the C-4 position. 4,4-dimethyl-9-beta,19-cyclopropylsterols such as 24-methylenecycloartanol are the preferred substrates. This Arabidopsis thaliana (Mouse-ear cress) protein is Methylsterol monooxygenase 1-3.